The following is a 434-amino-acid chain: Histidinol dehydrogenase (434 aa).

Residues Y129, Q191, and N214 each coordinate NAD(+). Substrate contacts are provided by S240, Q262, and H265. Residues Q262 and H265 each coordinate Zn(2+). Active-site proton acceptor residues include E329 and H330. Substrate-binding residues include H330, D363, E417, and H422. Zn(2+) is bound at residue D363. Position 422 (H422) interacts with Zn(2+).

It belongs to the histidinol dehydrogenase family. Requires Zn(2+) as cofactor.

It carries out the reaction L-histidinol + 2 NAD(+) + H2O = L-histidine + 2 NADH + 3 H(+). The protein operates within amino-acid biosynthesis; L-histidine biosynthesis; L-histidine from 5-phospho-alpha-D-ribose 1-diphosphate: step 9/9. In terms of biological role, catalyzes the sequential NAD-dependent oxidations of L-histidinol to L-histidinaldehyde and then to L-histidine. The chain is Histidinol dehydrogenase from Colwellia psychrerythraea (strain 34H / ATCC BAA-681) (Vibrio psychroerythus).